The sequence spans 76 residues: Esculentin-2MT3 (76 aa).

Residues 1–22 (MFTLKKSMLLLFFLGTISLSLC) form the signal peptide. A propeptide spans 23–37 (EEERNADEDDGEKEV) (removed in mature form). A disulfide bridge links cysteine 70 with cysteine 76.

Belongs to the frog skin active peptide (FSAP) family. Esculentin subfamily. As to expression, expressed by the skin glands.

The protein localises to the secreted. Antimicrobial peptide. This Amolops mantzorum (Sichuan torrent frog) protein is Esculentin-2MT3.